A 94-amino-acid chain; its full sequence is Small ribosomal subunit protein bS20 (94 aa).

Residues 1-10 (MANHASADKR) are compositionally biased toward basic and acidic residues. The tract at residues 1–20 (MANHASADKRNRQRITRTAR) is disordered. Over residues 11–20 (NRQRITRTAR) the composition is skewed to basic residues.

The protein belongs to the bacterial ribosomal protein bS20 family.

In terms of biological role, binds directly to 16S ribosomal RNA. This is Small ribosomal subunit protein bS20 from Sorangium cellulosum (strain So ce56) (Polyangium cellulosum (strain So ce56)).